Here is a 289-residue protein sequence, read N- to C-terminus: HTH-type transcriptional activator AmpR (289 aa).

An HTH lysR-type domain is found at 6-63; that stretch reads LPLNALRVFEVAMRQGSFTKAAIELRVTQAAVSHQVARLEDLLGTALFLRTSQGLIPT. The segment at residues 23-42 is a DNA-binding region (H-T-H motif); it reads FTKAAIELRVTQAAVSHQVA.

The protein belongs to the LysR transcriptional regulatory family.

It is found in the cytoplasm. This protein is a positive regulator of gene expression of cephalosporinase (AmpC). In Rhodobacter capsulatus (Rhodopseudomonas capsulata), this protein is HTH-type transcriptional activator AmpR (ampR).